Consider the following 220-residue polypeptide: MNINKYIDHTLLKADSVQSQLDQLIEEAKAYDFASVCVNPCWVAYAAKALKGTDVKVCTVVGFPLGATTSATKAFETKDAIENGADEIDMVINIGLLKQGDYQAVEDDMRAVVEASGDKLVKVIIEACLLTDDEKVKACQLAVNAGVDFVKTSTGFSTGGATVSDVKLMRQTVGPDIGVKAAGGARSLEDALAFVEAGATRIGTSAGVTIMKGEVANGGY.

Asp-89 acts as the Proton donor/acceptor in catalysis. The Schiff-base intermediate with acetaldehyde role is filled by Lys-151. Catalysis depends on Lys-180, which acts as the Proton donor/acceptor.

The protein belongs to the DeoC/FbaB aldolase family. DeoC type 1 subfamily.

The protein localises to the cytoplasm. The enzyme catalyses 2-deoxy-D-ribose 5-phosphate = D-glyceraldehyde 3-phosphate + acetaldehyde. The protein operates within carbohydrate degradation; 2-deoxy-D-ribose 1-phosphate degradation; D-glyceraldehyde 3-phosphate and acetaldehyde from 2-deoxy-alpha-D-ribose 1-phosphate: step 2/2. Catalyzes a reversible aldol reaction between acetaldehyde and D-glyceraldehyde 3-phosphate to generate 2-deoxy-D-ribose 5-phosphate. The protein is Deoxyribose-phosphate aldolase of Streptococcus equi subsp. equi (strain 4047).